A 299-amino-acid chain; its full sequence is Protease HtpX homolog (299 aa).

2 helical membrane passes run 14-34 (IVLLIVFFMLLAAIGAAVGYL) and 39-59 (LVGGMAIALIIGFIYAFSMIF). H143 contributes to the Zn(2+) binding site. Residue E144 is part of the active site. H147 serves as a coordination point for Zn(2+). 2 helical membrane-spanning segments follow: residues 158–178 (IAVALASAVTLISSIGGRMMW) and 198–218 (IILLIFSLLAIILAPLAASLV). A Zn(2+)-binding site is contributed by E227.

This sequence belongs to the peptidase M48B family. It depends on Zn(2+) as a cofactor.

The protein localises to the cell membrane. This is Protease HtpX homolog from Streptococcus mutans serotype c (strain ATCC 700610 / UA159).